Reading from the N-terminus, the 392-residue chain is Ribosomal RNA large subunit methyltransferase G (392 aa).

This sequence belongs to the methyltransferase superfamily. RlmG family.

It is found in the cytoplasm. It carries out the reaction guanosine(1835) in 23S rRNA + S-adenosyl-L-methionine = N(2)-methylguanosine(1835) in 23S rRNA + S-adenosyl-L-homocysteine + H(+). In terms of biological role, specifically methylates the guanine in position 1835 (m2G1835) of 23S rRNA. The polypeptide is Ribosomal RNA large subunit methyltransferase G (Colwellia psychrerythraea (strain 34H / ATCC BAA-681) (Vibrio psychroerythus)).